A 736-amino-acid polypeptide reads, in one-letter code: MSSGPIRTLHKGKAARNRTPYDRIAASKDGNHSNGPQTPSKSIFQRAKEWLTPSSWKKAISIFSSPVVNKHEDSFDSKTDEEYLQNVSTTTEDVSMLINTPVTEKYEQEHRDTSAQATPSIVEQSPNQMLANFFSKKGKTPLNEIEKEGIISILNKSASPSSSVISPAASLNRFQTPRAAAISKRESGVSSEPRARTSSLTPGNTPNSAKQWSAFRSTFSPLREQDQLSTISPNSLLPAQRLSYYGPTLSTPYNRRLRHKRHSTTPISLSNSIAPSLSFQPKKARYESANVSFNDTSFTNVPTSSPLHQSTTANHPEKTPSRAAASLLSILDSKEKNTPSITAKAGSPQSAPSKASYISPYARPGITTSRRRHDQIRPSSEKSEPEKKEPSAFETLEKSSNVQTYKPSLMPEFLEKASTHGSFAKQKEGEQTSLSEKTALSEPENKTPVFSFKAPSATTDKPSPPVSSIFSFNAPSAASTKPSPAVSSTFSFNAPTTTPSATSFSIINKEKPARSPNETIDVDLEEEGSGISAEVEVANEGEDLQKNATEVKASTSEKPVFRFEAVTDEKNSEVSSSNQASSSTMISQPNTGFSFGSFNKPAGQEEKPQQRSLFSASFTTQKPELPAAKIEPEVQMTNVAIDQRSFEQAEKSPISVSESTSLVEVEKPSAEGTNEHKQDATMTLEKTDKQGSLEEEPFPKFSFTVLPKENGENLSTMESTQELPKFSFSVLKEEKN.

A disordered region spans residues 1–46 (MSSGPIRTLHKGKAARNRTPYDRIAASKDGNHSNGPQTPSKSIFQR). Residues 19-31 (TPYDRIAASKDGN) are compositionally biased toward basic and acidic residues. A compositionally biased stretch (polar residues) spans 32–43 (HSNGPQTPSKSI). Ser157, Ser159, Ser161, and Ser162 each carry phosphoserine. 5 disordered regions span residues 178-210 (RAAAISKRESGVSSEPRARTSSLTPGNTPNSAK), 295-321 (DTSFTNVPTSSPLHQSTTANHPEKTPS), 338-519 (TPSI…PNET), 565-614 (AVTD…RSLF), and 647-701 (EQAE…FPKF). Composition is skewed to polar residues over residues 196-210 (RTSSLTPGNTPNSAK) and 295-314 (DTSFTNVPTSSPLHQSTTAN). Positions 375–397 (QIRPSSEKSEPEKKEPSAFETLE) are enriched in basic and acidic residues. A compositionally biased stretch (polar residues) spans 456-473 (SATTDKPSPPVSSIFSFN). Low complexity-rich tracts occupy residues 474 to 505 (APSAASTKPSPAVSSTFSFNAPTTTPSATSFS) and 573 to 587 (EVSSSNQASSSTMIS). A compositionally biased stretch (polar residues) spans 588–597 (QPNTGFSFGS). Positions 664–692 (EVEKPSAEGTNEHKQDATMTLEKTDKQGS) are enriched in basic and acidic residues.

Component of the nuclear pore complex (NPC). NPC constitutes the exclusive means of nucleocytoplasmic transport. NPCs allow the passive diffusion of ions and small molecules and the active, nuclear transport receptor-mediated bidirectional transport of macromolecules such as proteins, RNAs, ribonucleoparticles (RNPs), and ribosomal subunits across the nuclear envelope.

Its subcellular location is the nucleus. The protein resides in the nuclear pore complex. It localises to the nucleus membrane. Functions as a component of the nuclear pore complex (NPC). NPC components, collectively referred to as nucleoporins (NUPs), can play the role of both NPC structural components and of docking or interaction partners for transiently associated nuclear transport factors. Active directional transport is assured by both, a Phe-Gly (FG) repeat affinity gradient for these transport factors across the NPC and a transport cofactor concentration gradient across the nuclear envelope. The protein is Nucleoporin nup60 (nup60) of Schizosaccharomyces pombe (strain 972 / ATCC 24843) (Fission yeast).